Reading from the N-terminus, the 487-residue chain is L-tartrate/succinate antiporter (487 aa).

A run of 14 helical transmembrane segments spans residues 10-30 (YLAPLAVIAIIALLPVPAGLE), 33-53 (TWLYFAVFTGVIVGLILEPVP), 54-74 (GAVVAMVGISIIAILSPWLLF), 93-113 (WAVSGFSNSVIWLIFAAFMFG), 137-157 (TLFLGYAVMFSELILAPVTPS), 189-209 (IGSYIMWMGIVADCVTSAIFL), 236-256 (FLGMLPLSILLVLLVPWLAYV), 292-312 (LMVGALVLWIFGGDYIDAAMV), 313-333 (GYSVVALMLLLRIISWDDIVS), 340-360 (VFFWLASLITLATGLNNTGFI), 370-390 (SLSGYSPTMVMVTLIVVFYLL), 393-413 (FFASATAYTCALAPMMIAAAL), 418-438 (IPLPVFCLMVGAAIGLGSILT), and 465-485 (IFGLIFLVLLVITGLLWMPVV).

This sequence belongs to the SLC13A/DASS transporter (TC 2.A.47) family. DIT1 subfamily.

Its subcellular location is the cell inner membrane. It carries out the reaction (2R,3R)-tartrate(out) + succinate(in) = (2R,3R)-tartrate(in) + succinate(out). Its function is as follows. Catalyzes the uptake of tartrate in exchange for intracellular succinate. Essential for anaerobic L-tartrate fermentation. In Shigella flexneri, this protein is L-tartrate/succinate antiporter (ttdT).